The following is a 364-amino-acid chain: MTTPLIEIRQIYKSYGNTPILNNVSLNVNHGEFLTLLGPSGCGKTTLLRLISGFEQPTLGEIFINGQCVNQLPPQKRDVHTVFQSYALFPHLSVFENVAFALRCKKTPNQEIRKRVFDALKLVQLESLAERNVKQLSGGQQQRVAIARAIINRPQVLLLDEPLSSLDYRLRKAMQSELKQLQKTLNMTFIFVTHDQEEALSMSDRIVVFNHGHIEQIGTPKAVYETPANLHVAMFIGEANIFDIQVHTVKDQDIVTNIEGIQLSCKNTGNYQVNEWLHLIVRPEDIRVWSLSEVEKTEGMLPGRIVDIIYKGSTVDLKVELSSGKIINASEFFDEDDDKLEYTLHETVWVQWLPGWEVLLPHEG.

In terms of domain architecture, ABC transporter spans 6–236 (IEIRQIYKSY…PANLHVAMFI (231 aa)). 38-45 (GPSGCGKT) is a binding site for ATP.

Belongs to the ABC transporter superfamily. Spermidine/putrescine importer (TC 3.A.1.11.1) family. In terms of assembly, the complex is composed of two ATP-binding proteins (PotA), two transmembrane proteins (PotB and PotC) and a solute-binding protein (PotD).

It is found in the cell inner membrane. The enzyme catalyses ATP + H2O + polyamine-[polyamine-binding protein]Side 1 = ADP + phosphate + polyamineSide 2 + [polyamine-binding protein]Side 1.. In terms of biological role, part of the ABC transporter complex PotABCD involved in spermidine/putrescine import. Responsible for energy coupling to the transport system. The protein is Spermidine/putrescine import ATP-binding protein PotA of Legionella pneumophila (strain Lens).